Reading from the N-terminus, the 866-residue chain is Translation initiation factor IF-2 (866 aa).

Disordered regions lie at residues 1–63 and 92–257; these read MTND…AAVQ and VVRA…RGRS. Polar residues predominate over residues 26–36; the sequence is ETGQVRQSFSH. Residues 92–135 are compositionally biased toward basic and acidic residues; the sequence is VVRAAEEAERKRLEEIERRRREEEEARLKVEEEARRKAEEEAAR. Low complexity-rich tracts occupy residues 152–164 and 179–197; these read VAPA…AAPQ and PDAS…TEAP. In terms of domain architecture, tr-type G spans 365 to 533; it reads SRPPVVTVMG…AILLQSEILD (169 aa). The segment at 374–381 is G1; it reads GHVDHGKT. 374–381 contributes to the GTP binding site; sequence GHVDHGKT. Positions 399–403 are G2; it reads GITQH. The interval 421–424 is G3; the sequence is DTPG. GTP is bound by residues 421 to 425 and 475 to 478; these read DTPGH and NKMD. The G4 stretch occupies residues 475–478; that stretch reads NKMD. Residues 511 to 513 are G5; it reads SAK.

This sequence belongs to the TRAFAC class translation factor GTPase superfamily. Classic translation factor GTPase family. IF-2 subfamily.

Its subcellular location is the cytoplasm. Its function is as follows. One of the essential components for the initiation of protein synthesis. Protects formylmethionyl-tRNA from spontaneous hydrolysis and promotes its binding to the 30S ribosomal subunits. Also involved in the hydrolysis of GTP during the formation of the 70S ribosomal complex. The polypeptide is Translation initiation factor IF-2 (Rhodospirillum rubrum (strain ATCC 11170 / ATH 1.1.1 / DSM 467 / LMG 4362 / NCIMB 8255 / S1)).